We begin with the raw amino-acid sequence, 212 residues long: MFEQHKLSLQNLSCQRGERVLFRALTCDFNSGDFVQIEGHNGIGKTSLLRILAGLVRPLEGEVRWDSEAISKQREQYHQNLLYLGHLSGVKPELTAWENLQFYQRISQAEQNTDMLWDLLEKVGLLGREDLPAAQLSAGQQKRIALGRLWLSQAPLWILDEPFTAIDKKGVEILTALFDEHAQRGGIVLLTSHQEVPSSHLQKLNLAAYKAE.

Residues Leu-7 to Tyr-209 form the ABC transporter domain. Gly-39–Thr-46 lines the ATP pocket.

It belongs to the ABC transporter superfamily. CcmA exporter (TC 3.A.1.107) family. In terms of assembly, the complex is composed of two ATP-binding proteins (CcmA) and two transmembrane proteins (CcmB).

It localises to the cell inner membrane. The catalysed reaction is heme b(in) + ATP + H2O = heme b(out) + ADP + phosphate + H(+). Functionally, part of the ABC transporter complex CcmAB involved in the biogenesis of c-type cytochromes; once thought to export heme, this seems not to be the case, but its exact role is uncertain. Responsible for energy coupling to the transport system. The chain is Cytochrome c biogenesis ATP-binding export protein CcmA from Haemophilus influenzae (strain ATCC 51907 / DSM 11121 / KW20 / Rd).